A 528-amino-acid chain; its full sequence is Dihydromonacolin L monooxygenase LovA (528 aa).

The Cytoplasmic portion of the chain corresponds to 1 to 23; the sequence is MTVDALTQPHHLLSLAWNDTQQH. The chain crosses the membrane as a helical; Signal-anchor for type II membrane protein span at residues 24 to 44; the sequence is GSWFAPLVTTSAGLLCLLLYL. Residues 45 to 528 lie on the Lumenal side of the membrane; that stretch reads CSSGRRSDLP…DEDIRLPGSL (484 aa). A heme-binding site is contributed by Cys465.

It belongs to the cytochrome P450 family. Heme is required as a cofactor.

It localises to the membrane. The protein resides in the endoplasmic reticulum membrane. The enzyme catalyses dihydromonacolin L carboxylate + reduced [NADPH--hemoprotein reductase] + O2 = monacolin L carboxylate + oxidized [NADPH--hemoprotein reductase] + 2 H2O + H(+). It catalyses the reaction monacolin L carboxylate + reduced [NADPH--hemoprotein reductase] + O2 = monacolin J carboxylate + oxidized [NADPH--hemoprotein reductase] + H2O + H(+). It participates in polyketide biosynthesis; lovastatin biosynthesis. Its function is as follows. Dihydromonacolin L monooxygenase; part of the gene cluster that mediates the biosynthesis of lovastatin (also known as mevinolin, mevacor or monacolin K), a hypolipidemic inhibitor of (3S)-hydroxymethylglutaryl-coenzyme A (HMG-CoA) reductase (HMGR). The first step in the biosynthesis of lovastatin is the production of dihydromonacolin L acid by the lovastatin nonaketide synthase lovB and the trans-acting enoyl reductase lovC via condensation of one acetyl-CoA unit and 8 malonyl-CoA units. Dihydromonacolin L acid is released from lovB by the thioesterase lovG. Next, dihydromonacolin L acid is oxidized by the dihydromonacolin L monooxygenase lovA twice to form monacolin J acid. The 2-methylbutyrate moiety of lovastatin is synthesized by the lovastatin diketide synthase lovF via condensation of one acetyl-CoA unit and one malonyl-CoA unit. Finally, the covalent attachment of this moiety to monacolin J acid is catalyzed by the transesterase lovD to yield lovastatin. LovD has broad substrate specificity and can also convert monacolin J to simvastatin using alpha-dimethylbutanoyl-S-methyl-3-mercaptopropionate (DMB-S-MMP) as the thioester acyl donor, and can also catalyze the reverse reaction and function as hydrolase in vitro. LovD has much higher activity with LovF-bound 2-methylbutanoate than with free diketide substrates. The sequence is that of Dihydromonacolin L monooxygenase LovA from Aspergillus terreus.